The sequence spans 122 residues: Large ribosomal subunit protein uL14 (122 aa).

This sequence belongs to the universal ribosomal protein uL14 family. In terms of assembly, part of the 50S ribosomal subunit. Forms a cluster with proteins L3 and L19. In the 70S ribosome, L14 and L19 interact and together make contacts with the 16S rRNA in bridges B5 and B8.

Binds to 23S rRNA. Forms part of two intersubunit bridges in the 70S ribosome. The polypeptide is Large ribosomal subunit protein uL14 (Gemmatimonas aurantiaca (strain DSM 14586 / JCM 11422 / NBRC 100505 / T-27)).